Consider the following 225-residue polypeptide: Protein GrpE (225 aa).

Disordered stretches follow at residues 1–44 (MTEE…ENAG) and 183–225 (VAVA…PDEG).

This sequence belongs to the GrpE family. In terms of assembly, homodimer.

It localises to the cytoplasm. Participates actively in the response to hyperosmotic and heat shock by preventing the aggregation of stress-denatured proteins, in association with DnaK and GrpE. It is the nucleotide exchange factor for DnaK and may function as a thermosensor. Unfolded proteins bind initially to DnaJ; upon interaction with the DnaJ-bound protein, DnaK hydrolyzes its bound ATP, resulting in the formation of a stable complex. GrpE releases ADP from DnaK; ATP binding to DnaK triggers the release of the substrate protein, thus completing the reaction cycle. Several rounds of ATP-dependent interactions between DnaJ, DnaK and GrpE are required for fully efficient folding. This is Protein GrpE from Streptomyces coelicolor (strain ATCC BAA-471 / A3(2) / M145).